Here is a 189-residue protein sequence, read N- to C-terminus: Cold-regulated 413 plasma membrane protein 3 (189 aa).

The Extracellular segment spans residues 1 to 24; that stretch reads MENIEYLNEIQAVAGKLIHSYGVP. A helical membrane pass occupies residues 25 to 45; it reads VMITLFLRWLASIVAVFLMIL. Residues 46 to 55 are Cytoplasmic-facing; sequence DQTKWKYSNN. The chain crosses the membrane as a helical span at residues 56 to 76; sequence IMASLLAPYLFSSLPIVIFQV. The Extracellular portion of the chain corresponds to 77–79; that stretch reads LRN. The helical transmembrane segment at 80–100 threads the bilayer; that stretch reads GVGKWIALLTVILRLFLPNHF. The Cytoplasmic portion of the chain corresponds to 101 to 104; that stretch reads HESL. Residues 105–125 form a helical membrane-spanning segment; sequence EIPGATILLIVVTPSDIGAIF. At 126–168 the chain is on the extracellular side; it reads RDDLRYTGGDVCLLTSFYLINKHTKACGGIKNSFTQKDKVTYS. The chain crosses the membrane as a helical span at residues 169–189; it reads ICLWILFVYPILSSFAALFYL.

The protein belongs to the Cold-regulated 413 protein family.

It is found in the cell membrane. This Arabidopsis thaliana (Mouse-ear cress) protein is Cold-regulated 413 plasma membrane protein 3.